Reading from the N-terminus, the 253-residue chain is Imidazole glycerol phosphate synthase subunit HisF (253 aa).

Catalysis depends on residues Asp12 and Asp131.

Belongs to the HisA/HisF family. In terms of assembly, heterodimer of HisH and HisF.

The protein localises to the cytoplasm. The enzyme catalyses 5-[(5-phospho-1-deoxy-D-ribulos-1-ylimino)methylamino]-1-(5-phospho-beta-D-ribosyl)imidazole-4-carboxamide + L-glutamine = D-erythro-1-(imidazol-4-yl)glycerol 3-phosphate + 5-amino-1-(5-phospho-beta-D-ribosyl)imidazole-4-carboxamide + L-glutamate + H(+). Its pathway is amino-acid biosynthesis; L-histidine biosynthesis; L-histidine from 5-phospho-alpha-D-ribose 1-diphosphate: step 5/9. In terms of biological role, IGPS catalyzes the conversion of PRFAR and glutamine to IGP, AICAR and glutamate. The HisF subunit catalyzes the cyclization activity that produces IGP and AICAR from PRFAR using the ammonia provided by the HisH subunit. The protein is Imidazole glycerol phosphate synthase subunit HisF of Corynebacterium urealyticum (strain ATCC 43042 / DSM 7109).